The chain runs to 392 residues: Tryptophan synthase beta chain 1 (392 aa).

Lysine 85 is subject to N6-(pyridoxal phosphate)lysine.

The protein belongs to the TrpB family. Tetramer of two alpha and two beta chains. Pyridoxal 5'-phosphate is required as a cofactor.

The enzyme catalyses (1S,2R)-1-C-(indol-3-yl)glycerol 3-phosphate + L-serine = D-glyceraldehyde 3-phosphate + L-tryptophan + H2O. It functions in the pathway amino-acid biosynthesis; L-tryptophan biosynthesis; L-tryptophan from chorismate: step 5/5. Functionally, the beta subunit is responsible for the synthesis of L-tryptophan from indole and L-serine. This chain is Tryptophan synthase beta chain 1 (trpB1), found in Methanothermobacter thermautotrophicus (strain ATCC 29096 / DSM 1053 / JCM 10044 / NBRC 100330 / Delta H) (Methanobacterium thermoautotrophicum).